A 242-amino-acid chain; its full sequence is Small ribosomal subunit protein uS2 (242 aa).

It belongs to the universal ribosomal protein uS2 family.

In Neisseria gonorrhoeae (strain ATCC 700825 / FA 1090), this protein is Small ribosomal subunit protein uS2.